The primary structure comprises 206 residues: Large ribosomal subunit protein uL22m (206 aa).

Residues 1 to 40 (MAAAVLGQLGALWIHNLRSRGRLAWGVLPQSYVHTSASLD) constitute a mitochondrion transit peptide.

It belongs to the universal ribosomal protein uL22 family. Component of the mitochondrial ribosome large subunit (39S) which comprises a 16S rRNA and about 50 distinct proteins.

It localises to the mitochondrion. The sequence is that of Large ribosomal subunit protein uL22m (MRPL22) from Pongo abelii (Sumatran orangutan).